Here is a 437-residue protein sequence, read N- to C-terminus: Ribosomal protein uS12 methylthiotransferase RimO (437 aa).

The MTTase N-terminal domain occupies 3–118; the sequence is KKFYITTLGC…AGKILREKFP (116 aa). The [4Fe-4S] cluster site is built by cysteine 12, cysteine 48, cysteine 81, cysteine 157, cysteine 161, and cysteine 164. In terms of domain architecture, Radical SAM core spans 143-370; that stretch reads NYSKPYAYVK…RDSHLEILEE (228 aa). The region spanning 373-437 is the TRAM domain; that stretch reads ESRIGRTYDA…YEYDMNGTWV (65 aa).

The protein belongs to the methylthiotransferase family. RimO subfamily. [4Fe-4S] cluster is required as a cofactor.

Its subcellular location is the cytoplasm. The catalysed reaction is L-aspartate(89)-[ribosomal protein uS12]-hydrogen + (sulfur carrier)-SH + AH2 + 2 S-adenosyl-L-methionine = 3-methylsulfanyl-L-aspartate(89)-[ribosomal protein uS12]-hydrogen + (sulfur carrier)-H + 5'-deoxyadenosine + L-methionine + A + S-adenosyl-L-homocysteine + 2 H(+). Functionally, catalyzes the methylthiolation of an aspartic acid residue of ribosomal protein uS12. This chain is Ribosomal protein uS12 methylthiotransferase RimO, found in Leptospira interrogans serogroup Icterohaemorrhagiae serovar copenhageni (strain Fiocruz L1-130).